The primary structure comprises 365 residues: Uroporphyrinogen decarboxylase (365 aa).

Substrate-binding positions include 27-31, Asp77, Tyr154, Ser209, and His327; that span reads RQAGR.

Belongs to the uroporphyrinogen decarboxylase family. Homodimer.

It is found in the cytoplasm. It catalyses the reaction uroporphyrinogen III + 4 H(+) = coproporphyrinogen III + 4 CO2. It participates in porphyrin-containing compound metabolism; protoporphyrin-IX biosynthesis; coproporphyrinogen-III from 5-aminolevulinate: step 4/4. In terms of biological role, catalyzes the decarboxylation of four acetate groups of uroporphyrinogen-III to yield coproporphyrinogen-III. The protein is Uroporphyrinogen decarboxylase of Alkalilimnicola ehrlichii (strain ATCC BAA-1101 / DSM 17681 / MLHE-1).